The primary structure comprises 358 residues: MSQAAGNPYAAELAAAKKAVTLAARLCQAVQKDILQSGVQSKADQSPVTVADYGSQILVSLVLKMEAPASSSFSMVAEEDSEELRKEGAEEILENITELVNETIVDDGTYSIYFSKEGILSAIDDGKSEGGPSGRHWVLDPIDGTKGFLRGDQYAIALALLDEGKVVLGVLACPNLSLGSIGNLNGGSSGDQVGALFSATIGCGAEVESLQGSPAQKISVCSIDNPVEASFFESYEGAHSLRDLTGSIAEKLGVQAPPVRIDSQAKYGALARGDGAIYLRFPHKGYREKIWDHAAGSIVVTEAGGLVTDASGNDLDFSKGRFLDLDTGIIATNKQLMPSLLKAVQDAIKEQNQAASPL.

Residue Asp52 is the Proton acceptor of the active site. Positions 78, 140, 142, and 143 each coordinate Mg(2+). Residue Thr145 is the Proton acceptor of the active site. Adenosine 3',5'-bisphosphate contacts are provided by Thr145, His239, Ser263, Lys266, Arg280, and Asp292. Residues His239, Ser263, Lys266, Arg280, and Asp292 each contribute to the AMP site. Position 292 (Asp292) interacts with Mg(2+).

It belongs to the inositol monophosphatase superfamily. Mg(2+) is required as a cofactor. In terms of tissue distribution, is constitutively transcribed in both roots and shoots.

The enzyme catalyses 3'-phosphoadenylyl sulfate + H2O = adenosine 5'-phosphosulfate + phosphate. It catalyses the reaction adenosine 3',5'-bisphosphate + H2O = AMP + phosphate. It carries out the reaction adenosine 2',5'-bisphosphate + H2O = AMP + phosphate. Inhibited by Ca(2+), Li(+), and Na(+) and activated by K(+). In terms of biological role, phosphatase that converts adenosine 3'-phosphate 5'-phosphosulfate (PAPS) to adenosine 5'-phosphosulfate (APS) and 3'(2')-phosphoadenosine 5'-phosphate (PAP) to AMP. May regulate the flux of sulfur in the sulfur-activation pathway by converting PAPS to APS. Shows no activity on myo-inositol 1-phosphate, beta-glycerol phosphate, NADPH, NADP and 5'-AMP. The chain is 3'(2'),5'-bisphosphate nucleotidase from Oryza sativa (Rice).